Reading from the N-terminus, the 252-residue chain is Ribonuclease HII (252 aa).

Positions 41–232 (LLVAGVDEAG…VRLALEGREQ (192 aa)) constitute an RNase H type-2 domain. A divalent metal cation is bound by residues Asp-47, Glu-48, and Asp-140.

Belongs to the RNase HII family. Mn(2+) serves as cofactor. It depends on Mg(2+) as a cofactor.

It is found in the cytoplasm. It carries out the reaction Endonucleolytic cleavage to 5'-phosphomonoester.. Endonuclease that specifically degrades the RNA of RNA-DNA hybrids. The polypeptide is Ribonuclease HII (Xanthomonas oryzae pv. oryzae (strain KACC10331 / KXO85)).